Reading from the N-terminus, the 101-residue chain is Small ribosomal subunit protein uS14 (101 aa).

Belongs to the universal ribosomal protein uS14 family. In terms of assembly, part of the 30S ribosomal subunit. Contacts proteins S3 and S10.

Binds 16S rRNA, required for the assembly of 30S particles and may also be responsible for determining the conformation of the 16S rRNA at the A site. The protein is Small ribosomal subunit protein uS14 of Sphingopyxis alaskensis (strain DSM 13593 / LMG 18877 / RB2256) (Sphingomonas alaskensis).